We begin with the raw amino-acid sequence, 251 residues long: Histocompatibility antigen 60b (251 aa).

Residues 1 to 24 (MAKSSLSLNWSLLVLLNFLGATLS) form the signal peptide. The Extracellular segment spans residues 25 to 212 (TGTDSLSCEL…NSDTQGLSFT (188 aa)). Residues N63, N93, N126, and N189 are each glycosylated (N-linked (GlcNAc...) asparagine). Residues 213-233 (WIVIICIGGIVSFMAFMVFAW) form a helical membrane-spanning segment. At 234-251 (CMLKKKKGALCCSSSSTT) the chain is on the cytoplasmic side.

This sequence belongs to the NKG2D ligand family. In terms of tissue distribution, in strain C57BL/6J, strongly expressed in cardiac muscle and skeletal muscle, with lower expression levels in spleen, liver, kidney and thymus. In strain BALB/cJ, weakly expressed in cardiac muscle, spleen, kidney and thymus.

Its subcellular location is the cell membrane. In terms of biological role, ligand for the KLRK1 immunosurveillance receptor. Binding to KLRK1 stimulates cell lysis in vitro. The protein is Histocompatibility antigen 60b of Mus musculus (Mouse).